Consider the following 325-residue polypeptide: MLRLIALLVCVVYVYGDDVPYSSNQGKCGGHDYEKDGLCCASCHPGFYASRLCGPGSNTVCSPCEDGTFTASTNHAPACVSCRGPCTGHLSESQPCDRTHDRVCNCSTGNYCLLKGQNGCRICAPQTKCPAGYGVSGHTRAGDTLCEKCPPHTYSDSLSPTERCGTSFNYISVGFNLYPVNETSCTTTAGHNEVIKTKEFTVTLNYTDCDPVFHTEYYATSGKEGAGGFFTGTDIYQNTTKVCTLNVEIQCSEGDDIHTLQKTNGGSTMPHSETITVVGSCLSDVNVDIMYSDTNHPGEVDDFVEYHWGTRLRFFPLPKRCTPVS.

Residues 1–16 (MLRLIALLVCVVYVYG) form the signal peptide. 4 TNFR-Cys repeats span residues 27 to 62 (KCGG…TVCS), 63 to 104 (PCED…DRVC), 105 to 147 (NCST…TLCE), and 148 to 186 (KCPP…TSCT). Cystine bridges form between Cys28/Cys39, Cys40/Cys53, Cys43/Cys61, Cys64/Cys79, Cys82/Cys96, and Cys86/Cys104. N-linked (GlcNAc...) asparagine; by host glycosylation is present at Asn105. 4 disulfides stabilise this stretch: Cys106/Cys120, Cys123/Cys146, Cys129/Cys149, and Cys164/Cys185. Residues Asn181, Asn205, and Asn238 are each glycosylated (N-linked (GlcNAc...) asparagine; by host).

Functionally, binds to TNF-alpha and beta. Probably prevents TNF to reach cellular target and thereby deampening the potential antiviral effects of the cytokine. This chain is Tumor necrosis factor soluble receptor, found in Oryctolagus cuniculus (Rabbit).